The sequence spans 493 residues: Glycogen synthase 1 (493 aa).

Lysine 15 is an ADP-alpha-D-glucose binding site.

The protein belongs to the glycosyltransferase 1 family. Bacterial/plant glycogen synthase subfamily.

It catalyses the reaction [(1-&gt;4)-alpha-D-glucosyl](n) + ADP-alpha-D-glucose = [(1-&gt;4)-alpha-D-glucosyl](n+1) + ADP + H(+). It functions in the pathway glycan biosynthesis; glycogen biosynthesis. In terms of biological role, synthesizes alpha-1,4-glucan chains using ADP-glucose. The protein is Glycogen synthase 1 of Methylococcus capsulatus (strain ATCC 33009 / NCIMB 11132 / Bath).